Here is a 977-residue protein sequence, read N- to C-terminus: Monofunctional C1-tetrahydrofolate synthase, mitochondrial (977 aa).

The transit peptide at 1–31 (MSVRLPLLLRQLGRQQLPSGPACRLRELCRS) directs the protein to the mitochondrion. A disordered region spans residues 29 to 71 (CRSGSRSSSSGGGDPEGLRGRRLQDGQTFSSHGPGNPEAPGMD). The methylenetetrahydrofolate dehydrogenase and cyclohydrolase stretch occupies residues 32-347 (GSRSSSSGGG…REQQHRRWRL (316 aa)). Lysine 188 is subject to N6-acetyllysine; alternate. Lysine 188 bears the N6-succinyllysine; alternate mark. Residues 348-977 (HCLKLQPLSP…TETEQVKGLF (630 aa)) form a formyltetrahydrofolate synthetase region. A Phosphoserine modification is found at serine 356. 422–429 (TPLGEGKS) contacts ATP. Position 595 is an N6-succinyllysine (lysine 595).

In the N-terminal section; belongs to the tetrahydrofolate dehydrogenase/cyclohydrolase family. It in the C-terminal section; belongs to the formate--tetrahydrofolate ligase family. In terms of assembly, homodimer.

The protein localises to the mitochondrion. The catalysed reaction is (6S)-5,6,7,8-tetrahydrofolate + formate + ATP = (6R)-10-formyltetrahydrofolate + ADP + phosphate. It functions in the pathway one-carbon metabolism; tetrahydrofolate interconversion. Functionally, may provide the missing metabolic reaction required to link the mitochondria and the cytoplasm in the mammalian model of one-carbon folate metabolism complementing thus the enzymatic activities of MTHFD2. The polypeptide is Monofunctional C1-tetrahydrofolate synthase, mitochondrial (Mthfd1l) (Mus musculus (Mouse)).